Consider the following 776-residue polypeptide: Mitochondrial intermediate peptidase (776 aa).

The N-terminal 28 residues, 1–28 (MRRFSTLSRRLQRVVPASSASTANTSPS), are a transit peptide targeting the mitochondrion. A Zn(2+)-binding site is contributed by His-561. Glu-562 is a catalytic residue. Zn(2+) is bound by residues His-565 and His-568.

The protein belongs to the peptidase M3 family. Zn(2+) is required as a cofactor.

Its subcellular location is the mitochondrion matrix. It carries out the reaction Release of an N-terminal octapeptide as second stage of processing of some proteins imported into the mitochondrion.. In terms of biological role, cleaves proteins, imported into the mitochondrion, to their mature size. While most mitochondrial precursor proteins are processed to the mature form in one step by mitochondrial processing peptidase (MPP), the sequential cleavage by MIP of an octapeptide after initial processing by MPP is a required step for a subgroup of nuclear-encoded precursor proteins destined for the matrix or the inner membrane. The polypeptide is Mitochondrial intermediate peptidase (OCT1) (Yarrowia lipolytica (strain CLIB 122 / E 150) (Yeast)).